The following is a 250-amino-acid chain: 2,3-bisphosphoglycerate-dependent phosphoglycerate mutase (250 aa).

Residues 8-15 (RHGQSAWN), 21-22 (TG), arginine 60, 87-90 (ERHY), lysine 98, 114-115 (RR), and 183-184 (GN) each bind substrate. Histidine 9 functions as the Tele-phosphohistidine intermediate in the catalytic mechanism. The Proton donor/acceptor role is filled by glutamate 87.

It belongs to the phosphoglycerate mutase family. BPG-dependent PGAM subfamily. As to quaternary structure, homodimer.

It carries out the reaction (2R)-2-phosphoglycerate = (2R)-3-phosphoglycerate. It participates in carbohydrate degradation; glycolysis; pyruvate from D-glyceraldehyde 3-phosphate: step 3/5. Catalyzes the interconversion of 2-phosphoglycerate and 3-phosphoglycerate. This is 2,3-bisphosphoglycerate-dependent phosphoglycerate mutase from Nitratidesulfovibrio vulgaris (strain ATCC 29579 / DSM 644 / CCUG 34227 / NCIMB 8303 / VKM B-1760 / Hildenborough) (Desulfovibrio vulgaris).